The primary structure comprises 139 residues: D-ribose pyranase (139 aa).

The Proton donor role is filled by His-20. Substrate-binding positions include Asp-28, His-106, and 128–130; that span reads YAN.

It belongs to the RbsD / FucU family. RbsD subfamily. As to quaternary structure, homodecamer.

The protein resides in the cytoplasm. It catalyses the reaction beta-D-ribopyranose = beta-D-ribofuranose. The protein operates within carbohydrate metabolism; D-ribose degradation; D-ribose 5-phosphate from beta-D-ribopyranose: step 1/2. Its function is as follows. Catalyzes the interconversion of beta-pyran and beta-furan forms of D-ribose. In Photobacterium profundum (strain SS9), this protein is D-ribose pyranase.